A 120-amino-acid chain; its full sequence is MKAQEIIKSIEAEYLKSDLPTIHVGDTVRVGVRISEGGKERIQPYEGTVIAMRNGGISETITVRKIFQGVGVERVFLLHSPIIAAITVIRRGKVRRAKLYYLRDRVGKATRIRQRFDRPL.

The protein belongs to the bacterial ribosomal protein bL19 family.

Functionally, this protein is located at the 30S-50S ribosomal subunit interface and may play a role in the structure and function of the aminoacyl-tRNA binding site. The polypeptide is Large ribosomal subunit protein bL19 (Rippkaea orientalis (strain PCC 8801 / RF-1) (Cyanothece sp. (strain PCC 8801))).